Reading from the N-terminus, the 147-residue chain is Large ribosomal subunit protein uL13 (147 aa).

It belongs to the universal ribosomal protein uL13 family. In terms of assembly, part of the 50S ribosomal subunit.

Functionally, this protein is one of the early assembly proteins of the 50S ribosomal subunit, although it is not seen to bind rRNA by itself. It is important during the early stages of 50S assembly. This is Large ribosomal subunit protein uL13 from Mycobacterium marinum (strain ATCC BAA-535 / M).